A 230-amino-acid chain; its full sequence is Nucleoside diphosphate kinase 2, chloroplastic (230 aa).

The transit peptide at 1–64 (MEAMAVFSGS…SYPKTFRTRS (64 aa)) directs the protein to the chloroplast. ATP is bound by residues Lys90, Phe138, Arg166, Thr172, Arg183, and Asn193. The Pros-phosphohistidine intermediate role is filled by His196.

It belongs to the NDK family. The cofactor is Mg(2+).

Its subcellular location is the plastid. The protein resides in the chloroplast. It catalyses the reaction a 2'-deoxyribonucleoside 5'-diphosphate + ATP = a 2'-deoxyribonucleoside 5'-triphosphate + ADP. The enzyme catalyses a ribonucleoside 5'-diphosphate + ATP = a ribonucleoside 5'-triphosphate + ADP. Its function is as follows. Major role in the synthesis of nucleoside triphosphates other than ATP. The ATP gamma phosphate is transferred to the NDP beta phosphate via a ping-pong mechanism, using a phosphorylated active-site intermediate. The protein is Nucleoside diphosphate kinase 2, chloroplastic (NDPK2) of Pisum sativum (Garden pea).